Consider the following 807-residue polypeptide: Maternal DNA replication licensing factor mcm3 (807 aa).

In terms of domain architecture, MCM spans 295–502; it reads IFEHLSKSLA…NDQEIADHVL (208 aa). 345 to 352 contributes to the ATP binding site; the sequence is GDPSVAKS. Residues 477–480 carry the Arginine finger motif; that stretch reads SRFD. Basic and acidic residues predominate over residues 664-673; sequence KTDKDLHDEN. The tract at residues 664–741 is disordered; it reads KTDKDLHDEN…QDGKRSLSQN (78 aa). Positions 707–723 are enriched in polar residues; sequence FSEQDSSLNENLSQSLR. The segment covering 727–741 has biased composition (basic and acidic residues); sequence KKAESQDGKRSLSQN.

Belongs to the MCM family. Component of the mcm2-7 complex (RLF-M). The complex forms a toroidal hexameric ring with the proposed subunit order mcm2-mcm6-mcm4-mcm7-mcm3-mcm5. The heterodimer of mmcm3/mcm5 interacts with mcm4, mmcm6, mcm7 and weakly with mcm2. Interacts with mcm7, though this interaction may not be direct, and remains in a complex with mcm7 throughout the cell cycle. Component of the CMG helicase complex, composed of the mcm2-7 complex, the GINS complex and cdc45.

The protein resides in the nucleus. It is found in the chromosome. It catalyses the reaction ATP + H2O = ADP + phosphate + H(+). Functionally, acts as a component of the mcm2-7 complex (mcm complex) which is the putative replicative helicase essential for 'once per cell cycle' DNA replication initiation and elongation in eukaryotic cells. The active ATPase sites in the mcm2-7 ring are formed through the interaction surfaces of two neighboring subunits such that a critical structure of a conserved arginine finger motif is provided in trans relative to the ATP-binding site of the Walker A box of the adjacent subunit. The six ATPase active sites, however, are likely to contribute differentially to the complex helicase activity. The existence of maternal and zygotic forms of mcm3 and mcm6 suggests that specific forms of mcm2-7 complexes may be used during different stages of development. The protein is Maternal DNA replication licensing factor mcm3 (mmcm3) of Xenopus laevis (African clawed frog).